Consider the following 206-residue polypeptide: LexA repressor (206 aa).

The H-T-H motif DNA-binding region spans 28–48 (VREIGEAVGLASSSTVHGHLS). Active-site for autocatalytic cleavage activity residues include Ser-129 and Lys-167.

Belongs to the peptidase S24 family. As to quaternary structure, homodimer.

The enzyme catalyses Hydrolysis of Ala-|-Gly bond in repressor LexA.. Its function is as follows. Represses a number of genes involved in the response to DNA damage (SOS response), including recA and lexA. In the presence of single-stranded DNA, RecA interacts with LexA causing an autocatalytic cleavage which disrupts the DNA-binding part of LexA, leading to derepression of the SOS regulon and eventually DNA repair. This chain is LexA repressor, found in Staphylococcus epidermidis (strain ATCC 35984 / DSM 28319 / BCRC 17069 / CCUG 31568 / BM 3577 / RP62A).